The chain runs to 100 residues: ATP-dependent Clp protease adapter protein ClpS (100 aa).

The protein belongs to the ClpS family. In terms of assembly, binds to the N-terminal domain of the chaperone ClpA.

Involved in the modulation of the specificity of the ClpAP-mediated ATP-dependent protein degradation. This is ATP-dependent Clp protease adapter protein ClpS from Corynebacterium glutamicum (strain R).